We begin with the raw amino-acid sequence, 96 residues long: Large ribosomal subunit protein eL30 (96 aa).

It belongs to the eukaryotic ribosomal protein eL30 family.

The sequence is that of Large ribosomal subunit protein eL30 from Methanosphaerula palustris (strain ATCC BAA-1556 / DSM 19958 / E1-9c).